Consider the following 84-residue polypeptide: Small ribosomal subunit protein uS15 (84 aa).

The protein belongs to the universal ribosomal protein uS15 family. In terms of assembly, part of the 30S ribosomal subunit. Forms a bridge to the 50S subunit in the 70S ribosome, contacting the 23S rRNA.

Its function is as follows. One of the primary rRNA binding proteins, it binds directly to 16S rRNA where it helps nucleate assembly of the platform of the 30S subunit by binding and bridging several RNA helices of the 16S rRNA. In terms of biological role, forms an intersubunit bridge (bridge B4) with the 23S rRNA of the 50S subunit in the ribosome. This chain is Small ribosomal subunit protein uS15, found in Fervidobacterium nodosum (strain ATCC 35602 / DSM 5306 / Rt17-B1).